The following is a 288-amino-acid chain: Phosphatidylserine decarboxylase proenzyme (288 aa).

Residues D95, H152, and S255 each act as charge relay system; for autoendoproteolytic cleavage activity in the active site. S255 serves as the catalytic Schiff-base intermediate with substrate; via pyruvic acid; for decarboxylase activity. S255 is subject to Pyruvic acid (Ser); by autocatalysis.

Belongs to the phosphatidylserine decarboxylase family. PSD-B subfamily. Prokaryotic type I sub-subfamily. As to quaternary structure, heterodimer of a large membrane-associated beta subunit and a small pyruvoyl-containing alpha subunit. The cofactor is pyruvate. Is synthesized initially as an inactive proenzyme. Formation of the active enzyme involves a self-maturation process in which the active site pyruvoyl group is generated from an internal serine residue via an autocatalytic post-translational modification. Two non-identical subunits are generated from the proenzyme in this reaction, and the pyruvate is formed at the N-terminus of the alpha chain, which is derived from the carboxyl end of the proenzyme. The autoendoproteolytic cleavage occurs by a canonical serine protease mechanism, in which the side chain hydroxyl group of the serine supplies its oxygen atom to form the C-terminus of the beta chain, while the remainder of the serine residue undergoes an oxidative deamination to produce ammonia and the pyruvoyl prosthetic group on the alpha chain. During this reaction, the Ser that is part of the protease active site of the proenzyme becomes the pyruvoyl prosthetic group, which constitutes an essential element of the active site of the mature decarboxylase.

The protein localises to the cell membrane. It catalyses the reaction a 1,2-diacyl-sn-glycero-3-phospho-L-serine + H(+) = a 1,2-diacyl-sn-glycero-3-phosphoethanolamine + CO2. The protein operates within phospholipid metabolism; phosphatidylethanolamine biosynthesis; phosphatidylethanolamine from CDP-diacylglycerol: step 2/2. Functionally, catalyzes the formation of phosphatidylethanolamine (PtdEtn) from phosphatidylserine (PtdSer). The sequence is that of Phosphatidylserine decarboxylase proenzyme from Methylococcus capsulatus (strain ATCC 33009 / NCIMB 11132 / Bath).